The primary structure comprises 249 residues: ATP synthase subunit a (249 aa).

6 consecutive transmembrane segments (helical) span residues 30–50 (QSPL…YVGM), 86–106 (FFPF…LGLL), 115–135 (HIAV…LASI), 146–166 (FLPA…EIIS), 191–211 (VFAG…VLAI), and 218–238 (IALT…FAIL).

It belongs to the ATPase A chain family. In terms of assembly, F-type ATPases have 2 components, CF(1) - the catalytic core - and CF(0) - the membrane proton channel. CF(1) has five subunits: alpha(3), beta(3), gamma(1), delta(1), epsilon(1). CF(0) has three main subunits: a(1), b(2) and c(9-12). The alpha and beta chains form an alternating ring which encloses part of the gamma chain. CF(1) is attached to CF(0) by a central stalk formed by the gamma and epsilon chains, while a peripheral stalk is formed by the delta and b chains.

The protein resides in the cell inner membrane. In terms of biological role, key component of the proton channel; it plays a direct role in the translocation of protons across the membrane. The protein is ATP synthase subunit a of Gluconobacter oxydans (strain 621H) (Gluconobacter suboxydans).